The chain runs to 269 residues: 3-ketodihydrosphingosine reductase (269 aa).

Gly-10, Ser-12, Ser-13, Gly-14, Lys-36, and Asp-50 together coordinate NADPH. Positions 10–14 (GASSG) match the GXSXG motif. The active-site Nucleophile; for lipase activity is the Ser-12. Ser-128 (proton donor) is an active-site residue. Tyr-142 acts as the Proton acceptor in catalysis. NADP(+)-binding residues include Tyr-142 and Lys-146. NADPH-binding positions include 142–146 (YSASK) and 175–177 (FNT). Lys-146 is an active-site residue. Lys-146 functions as the Lowers pKa of active site Tyr in the catalytic mechanism.

The protein belongs to the short-chain dehydrogenases/reductases (SDR) family.

The catalysed reaction is sphinganine + NADP(+) = 3-oxosphinganine + NADPH + H(+). The protein operates within lipid metabolism; sphingolipid metabolism. Catalyzes the reduction of 3'-oxosphinganine (3-ketodihydrosphingosine/KDS) to sphinganine (dihydrosphingosine/DHS), the second step of de novo sphingolipid biosynthesis. The protein is 3-ketodihydrosphingosine reductase of Bacteroides thetaiotaomicron (strain ATCC 29148 / DSM 2079 / JCM 5827 / CCUG 10774 / NCTC 10582 / VPI-5482 / E50).